Reading from the N-terminus, the 202-residue chain is ATP-dependent Clp protease proteolytic subunit 2 (202 aa).

Ser-99 acts as the Nucleophile in catalysis. The active site involves His-124.

Belongs to the peptidase S14 family. Fourteen ClpP subunits assemble into 2 heptameric rings which stack back to back to give a disk-like structure with a central cavity, resembling the structure of eukaryotic proteasomes.

The protein localises to the cytoplasm. It carries out the reaction Hydrolysis of proteins to small peptides in the presence of ATP and magnesium. alpha-casein is the usual test substrate. In the absence of ATP, only oligopeptides shorter than five residues are hydrolyzed (such as succinyl-Leu-Tyr-|-NHMec, and Leu-Tyr-Leu-|-Tyr-Trp, in which cleavage of the -Tyr-|-Leu- and -Tyr-|-Trp bonds also occurs).. Cleaves peptides in various proteins in a process that requires ATP hydrolysis. Has a chymotrypsin-like activity. Plays a major role in the degradation of misfolded proteins. This is ATP-dependent Clp protease proteolytic subunit 2 from Desulfitobacterium hafniense (strain Y51).